The following is a 57-amino-acid chain: Large ribosomal subunit protein bL33 (57 aa).

The protein belongs to the bacterial ribosomal protein bL33 family.

The sequence is that of Large ribosomal subunit protein bL33 from Shewanella amazonensis (strain ATCC BAA-1098 / SB2B).